The sequence spans 128 residues: DNA-directed RNA polymerase subunit omega (128 aa).

It belongs to the RNA polymerase subunit omega family. The RNAP catalytic core consists of 2 alpha, 1 beta, 1 beta' and 1 omega subunit. When a sigma factor is associated with the core the holoenzyme is formed, which can initiate transcription.

It catalyses the reaction RNA(n) + a ribonucleoside 5'-triphosphate = RNA(n+1) + diphosphate. Promotes RNA polymerase assembly. Latches the N- and C-terminal regions of the beta' subunit thereby facilitating its interaction with the beta and alpha subunits. The protein is DNA-directed RNA polymerase subunit omega of Azorhizobium caulinodans (strain ATCC 43989 / DSM 5975 / JCM 20966 / LMG 6465 / NBRC 14845 / NCIMB 13405 / ORS 571).